We begin with the raw amino-acid sequence, 609 residues long: Phosphomethylpyrimidine synthase (609 aa).

Substrate-binding positions include asparagine 219, methionine 248, tyrosine 277, histidine 313, 333–335, 374–377, and glutamate 413; these read SRG and DGLR. Histidine 417 contributes to the Zn(2+) binding site. Tyrosine 440 lines the substrate pocket. Histidine 481 is a Zn(2+) binding site. [4Fe-4S] cluster-binding residues include cysteine 561, cysteine 564, and cysteine 569.

Belongs to the ThiC family. The cofactor is [4Fe-4S] cluster.

It carries out the reaction 5-amino-1-(5-phospho-beta-D-ribosyl)imidazole + S-adenosyl-L-methionine = 4-amino-2-methyl-5-(phosphooxymethyl)pyrimidine + CO + 5'-deoxyadenosine + formate + L-methionine + 3 H(+). It participates in cofactor biosynthesis; thiamine diphosphate biosynthesis. Catalyzes the synthesis of the hydroxymethylpyrimidine phosphate (HMP-P) moiety of thiamine from aminoimidazole ribotide (AIR) in a radical S-adenosyl-L-methionine (SAM)-dependent reaction. This Deinococcus geothermalis (strain DSM 11300 / CIP 105573 / AG-3a) protein is Phosphomethylpyrimidine synthase.